The sequence spans 532 residues: MRERIITFVSLLLVALLSFPSVSYCDDQTILYESFDEPFDGRWVVSEKAEYQGVWKHEKSEGHDDYGLLVSEKAKKYGIVKELDVDEPLNLNEGTVVLQYEARFQEGLECGGAYLKYLRPQEAGWVPQGFDNDSPYSIMFGPDKCGATNKVHFILKHKNPKSGEFVEHHLKFPPSVPFDMLSHVYTAVLKSDNEVRILVDGEEKKKGNLLSAEDFEPPLIPSKTIPDPEDKKPEDWDERAKIPDPNAVKPDDWDEDAPMEIEDEEAEKPEGWLDDEPVEVEDPEASKPEDWDDEEDGEWEAPKVSNTKCEAAPGCGEWKRPMKRNPAYKGKWSSPLIDNPAYKGIWKPRDIPNPDYFELERPNLEPIAAIGIEIWTMQDGILFDNILISKDEKVAETYRQSTWKPKFDVEKEKQKAEDEAAGEADGLKSYQKKVFDLLYKVADISFLSAYKSKIMELIEKAETQPNLTIGVLISIVIVFLSLFFKLIFGGAKAKVEKKKPETAAETSTSEAKTEEKAEAVAAPRKRQTRRES.

The first 25 residues, 1–25 (MRERIITFVSLLLVALLSFPSVSYC), serve as a signal peptide directing secretion. Residues 26 to 468 (DDQTILYESF…EKAETQPNLT (443 aa)) lie on the Lumenal side of the membrane. 2 residues coordinate Ca(2+): Ser34 and Asp65. A disulfide bridge connects residues Cys110 and Cys145. An alpha-D-glucoside-binding residues include Tyr114, Lys116, Tyr136, and Asp143. Positions 208–302 (NLLSAEDFEP…DEEDGEWEAP (95 aa)) are disordered. The interval 225–358 (IPDPEDKKPE…RDIPNPDYFE (134 aa)) is p domain (Extended arm). Basic and acidic residues predominate over residues 226–242 (PDPEDKKPEDWDERAKI). 5 consecutive repeat copies span residues 227 to 238 (DPEDKKPEDWDE), 244 to 255 (DPNAVKPDDWDE), 263 to 274 (DEEAEKPEGWLD), 282 to 293 (DPEASKPEDWDD), and 297 to 307 (GEWEAPKVSNT). 4 X approximate repeats regions lie at residues 227-293 (DPED…DWDD) and 297-354 (GEWE…IPNP). Acidic residues-rich tracts occupy residues 252–283 (DWDE…VEDP) and 290–299 (DWDDEEDGEW). The cysteines at positions 309 and 315 are disulfide-linked. 3 consecutive repeat copies span residues 316-326 (GEWKRPMKRNP), 330-340 (GKWSSPLIDNP), and 344-354 (GIWKPRDIPNP). Glu373 is a binding site for an alpha-D-glucoside. Asp384 lines the Ca(2+) pocket. N-linked (GlcNAc...) asparagine glycosylation is present at Asn466. The chain crosses the membrane as a helical span at residues 469–489 (IGVLISIVIVFLSLFFKLIFG). The Cytoplasmic segment spans residues 490–532 (GAKAKVEKKKPETAAETSTSEAKTEEKAEAVAAPRKRQTRRES). Positions 493-532 (AKVEKKKPETAAETSTSEAKTEEKAEAVAAPRKRQTRRES) are disordered. The segment covering 523–532 (PRKRQTRRES) has biased composition (basic residues).

The protein belongs to the calreticulin family.

Its subcellular location is the endoplasmic reticulum membrane. Its function is as follows. Calcium-binding protein that interacts with newly synthesized monoglucosylated glycoproteins in the endoplasmic reticulum. It may act in assisting protein assembly and/or in the retention within the ER of unassembled protein subunits. It seems to play a major role in the quality control apparatus of the ER by the retention of incorrectly folded proteins. The protein is Calnexin homolog 2 of Arabidopsis thaliana (Mouse-ear cress).